A 94-amino-acid chain; its full sequence is MNPFASLEGQDNISSVFFLHMQQFESQVKDRFRFPIFRLERKTFGNSCYQVETLKVKCRPRHAKSCNLLTLLFKSRTQSVLVPNFGFLILNSEP.

This is an uncharacterized protein from Saccharomyces cerevisiae (strain ATCC 204508 / S288c) (Baker's yeast).